Here is a 1086-residue protein sequence, read N- to C-terminus: MTMLKEIKKADLSAAFYPSGELAWLKLKDIMLNQVIQNPLENRLSQIYVRAHVGDKIEIYPLLSRDAEVGFNENGVEYRGVVGPFRYSVQMHFHTRGWFYDVTVDGDLEFDLVYLQDLGLAEQAAVRTNEAYMSQYIDYHVTEGATGFTVQARQNQPQNERFPAVQIGALTKIVGYATDGFDIYGTNYKLTSELANLKEKSLPSRVYQYEFAQISLQTELFTNHGETIFYGYATENQPKASGAPFENLAELKSNISEQPYQPSTKAILNKHIGTPITGETISDSWLQENFPDRIQEEQQNGALLSFFTPNYAHVVMREKEAELERPHGSILLDKVDVLNPEATLSATTYMYGAFLSQLVAGNTNMNKWNSHARNPLNILQTSGLRIYIELDSELRLLGVPSVWETSTNYSTWYYQWNGDLITVQTTLTADSKEAFVTVHSEKGHSYKLVLTNQVTMGTNEYDTTVKKEIKDGIVTYFPAEDSPILETYPALQFRVDGTYNELTDERYFAKDYVGTAGLDVFVFEPSDKATFHVQAKLSDEFSKPTEDLEANNKVIRASYDELTAQFHLNHQSTTAEKLNLTVYWYAHQMLVHYASPHGLEQYSGAAWGTRDVSQGPFEFFLATGNKAVLRKLVLTIFSHQYQDTGDWPQWFMFDKYTSIQQEESHGDVIVWPLKIIGDYLEMSGDAGILEEAIPFVDRESKTFTKEQGTLLEHIELAVKTIEARFMKGTALSNYGDGDWDDTLQPANAQLKKNMVSSWTVALTYQTFKRLAAFLPVGEKYETLAKNVQADFAKYMTNDTDVIPGFLYLEEGKAPVWMIHPEDKETNIKYRLIPLTRSVISELVDKKQASRNFEIIGEHLLHPDGVRLMSEPAHYAGGVSTHFKRAEQAANFGREVGLQYVHAHIRYIEALAKIGDKSAWHMLDVINPINIKEVVPNAALRQSNTYFSSSDAAFLDRYQAQNEFGRVKEGSIPVKGGWRIYSSGPGIYLHQLISSVLGIRQTEDALIFDPILPEELDGLECHIELDNYPLDLTFESADEGSIVVNGEKQPVENGANLYRTGALILPKKNLTTKCSQITIKFQKNNRL.

Asp-741 functions as the Proton donor in the catalytic mechanism.

The protein belongs to the glycosyl hydrolase 94 family. As to quaternary structure, monomer.

The enzyme catalyses [(1-&gt;2)-beta-D-glucosyl](n) + phosphate = [(1-&gt;2)-beta-D-glucosyl](n-1) + alpha-D-glucose 1-phosphate. In terms of biological role, catalyzes the reversible phosphorolysis of beta-(1-&gt;2)-D-glucans. The minimum length of the substrate for the phosphorolytic reaction is 3 D-glucose units. The polypeptide is 1,2-beta-oligoglucan phosphorylase (Listeria innocua serovar 6a (strain ATCC BAA-680 / CLIP 11262)).